The chain runs to 428 residues: Sulfite exporter TauE/SafE family protein 6 (428 aa).

11 consecutive transmembrane segments (helical) span residues 1 to 21 (MKTL…NANQ), 61 to 81 (ALVV…ASGI), 82 to 102 (GDGF…LKAA), 105 to 125 (FSAF…HFGC), 128 to 148 (LIDY…VSVG), 149 to 169 (VICN…VFLM), 245 to 265 (YWIL…LALS), 294 to 314 (VMSF…GMII), 332 to 352 (TSFM…LLGM), 356 to 376 (EAAY…LVFA), and 388 to 408 (IIVF…ASFG).

The protein belongs to the 4-toluene sulfonate uptake permease (TSUP) (TC 2.A.102) family.

It localises to the membrane. The protein is Sulfite exporter TauE/SafE family protein 6 of Arabidopsis thaliana (Mouse-ear cress).